The following is a 493-amino-acid chain: Protein kinase PINOID 2 (493 aa).

A disordered region spans residues 1-53 (MAAIKEESDYDSSRSSLTAPDSRRSWISDIGSSSSVSARSFGGDTPASSCRYK). Positions 27–44 (ISDIGSSSSVSARSFGGD) are enriched in low complexity. Positions 80 to 443 (FRLVRRLGSG…SAEVKRHPFF (364 aa)) constitute a Protein kinase domain. ATP-binding positions include 86–94 (LGSGDLGNV) and lysine 120. Aspartate 216 acts as the Proton acceptor in catalysis. Residues 295–306 (GGGAAAGNNGDG) show a composition bias toward gly residues. Disordered regions lie at residues 295–320 (GGGA…TAEP) and 458–493 (EVPA…FDYF). The segment covering 307–319 (DGNDEEAETETAE) has biased composition (acidic residues). Positions 444–493 (KGVNWALVRSVRPPEVPAPPAPAPKKVMTMSKKERQEPYNYRPENHFDYF) constitute an AGC-kinase C-terminal domain. Residues 474–493 (SKKERQEPYNYRPENHFDYF) show a composition bias toward basic and acidic residues.

Belongs to the protein kinase superfamily. Ser/Thr protein kinase family.

The catalysed reaction is L-seryl-[protein] + ATP = O-phospho-L-seryl-[protein] + ADP + H(+). It catalyses the reaction L-threonyl-[protein] + ATP = O-phospho-L-threonyl-[protein] + ADP + H(+). Functionally, serine/threonine-protein kinase involved in the regulation of auxin signaling. In Oryza sativa subsp. japonica (Rice), this protein is Protein kinase PINOID 2 (PID2).